The primary structure comprises 257 residues: Transmembrane protein C257L (257 aa).

Helical transmembrane passes span 123–143 and 163–183; these read LELL…FTAL and MMIF…YVLV.

It belongs to the asfivirus C257R family.

It localises to the host membrane. It is found in the virion. In African swine fever virus (isolate Warthog/Namibia/Wart80/1980) (ASFV), this protein is Transmembrane protein C257L.